Reading from the N-terminus, the 714-residue chain is MEMASAFTLNVRLDNIAIITIDVPGEKMNTLKAEFASQVRAIIKQLRENKELRGVVFVSAKPDNFIAGADINMIGNCKTAQEAEVLARQGQQLMAEIHALPIPVIAAIHGACLGGGLELALACHGRVCTDDPKTVLGLPEVQLGLLPGSGGTQRLPRLIGVSTALEMILTGKQLRAKQAVKLGLVDDVVPHSILLEAAVELAKQDRPSSRPLPVRERILAGPLGRALLFKMVGKKTEHKTQGNYPATERILEVVETGLAQGTSSGYDAEARAFGELAMTPQSQALRNIFFASTEVKKDPGSDAPPAPLNSVGILGGGLMGGGIAYVTACKAGLPVRIKDINPQGINHALKYSWDQLEGKVRRRHLKASERDKQLALISGTTDYCGFAHRDLIIEAVFENLELKQQMVAEVEQNCATHTIFASNTSSLPIGDIAAHAARPEQVIGLHFFSPVEKMPLVEIIPHASTSAQTIATTVKLAKKQGKTPIVVRDKAGFYVNRILAPYINEAIRMLTEGERIEHIDTALVKFGFPVGPIQLLDEVGIDTGTKIMPVLEAAYGERFSAPANVVSSILNDDRKGRKNGRGFYLYGQKGRKSKKQVDPAIYPLIGAQGQGRLSAPQVAERCVMLMLNEAVCCLDEQVIRSVRDGDIGAVFGIGFPPFLGGPFRYIDSLGAGEVVAIMQRLATQYGSRFTPCNRFVEMSERGESFWKTTATDLQ.

An enoyl-CoA hydratase region spans residues 1 to 190 (MEMASAFTLN…KLGLVDDVVP (190 aa)). The 3-hydroxyacyl-CoA dehydrogenase stretch occupies residues 306–714 (APLNSVGILG…FWKTTATDLQ (409 aa)).

The protein in the N-terminal section; belongs to the enoyl-CoA hydratase/isomerase family. It in the central section; belongs to the 3-hydroxyacyl-CoA dehydrogenase family. As to quaternary structure, heterotetramer of two alpha chains (FadJ) and two beta chains (FadI).

It localises to the cytoplasm. It catalyses the reaction a (3S)-3-hydroxyacyl-CoA = a (2E)-enoyl-CoA + H2O. It carries out the reaction a 4-saturated-(3S)-3-hydroxyacyl-CoA = a (3E)-enoyl-CoA + H2O. The catalysed reaction is a (3S)-3-hydroxyacyl-CoA + NAD(+) = a 3-oxoacyl-CoA + NADH + H(+). The enzyme catalyses (3S)-3-hydroxybutanoyl-CoA = (3R)-3-hydroxybutanoyl-CoA. The protein operates within lipid metabolism; fatty acid beta-oxidation. Functionally, catalyzes the formation of a hydroxyacyl-CoA by addition of water on enoyl-CoA. Also exhibits 3-hydroxyacyl-CoA epimerase and 3-hydroxyacyl-CoA dehydrogenase activities. This chain is Fatty acid oxidation complex subunit alpha, found in Escherichia coli O6:K15:H31 (strain 536 / UPEC).